The chain runs to 88 residues: MPNTKSAEKALRVADANRQENRRAKSQVKTSLTKVKKLVDAGSLTEAEAAAVSAQSTLDKAAEKGILHPKNAARRKSRLMKKLNQAAK.

A compositionally biased stretch (basic and acidic residues) spans 1–23 (MPNTKSAEKALRVADANRQENRR). Disordered regions lie at residues 1-28 (MPNT…KSQV) and 69-88 (PKNA…QAAK). Positions 71 to 81 (NAARRKSRLMK) are enriched in basic residues.

It belongs to the bacterial ribosomal protein bS20 family.

Binds directly to 16S ribosomal RNA. The polypeptide is Small ribosomal subunit protein bS20 (Dehalococcoides mccartyi (strain ATCC BAA-2266 / KCTC 15142 / 195) (Dehalococcoides ethenogenes (strain 195))).